A 297-amino-acid polypeptide reads, in one-letter code: Coatomer subunit epsilon-2 (297 aa).

It belongs to the COPE family. In terms of assembly, oligomeric complex that consists of at least the alpha, beta, beta', gamma, delta, epsilon and zeta subunits.

It localises to the cytoplasm. The protein resides in the golgi apparatus membrane. The protein localises to the cytoplasmic vesicle. Its subcellular location is the COPI-coated vesicle membrane. Its function is as follows. The coatomer is a cytosolic protein complex that binds to dilysine motifs and reversibly associates with Golgi non-clathrin-coated vesicles, which further mediate biosynthetic protein transport from the ER, via the Golgi up to the trans Golgi network. The coatomer complex is required for budding from Golgi membranes, and is essential for the retrograde Golgi-to-ER transport of dilysine-tagged proteins. This is Coatomer subunit epsilon-2 from Oryza sativa subsp. japonica (Rice).